A 312-amino-acid chain; its full sequence is Ribosomal protein L11 methyltransferase (312 aa).

Positions 163, 184, 206, and 248 each coordinate S-adenosyl-L-methionine.

The protein belongs to the methyltransferase superfamily. PrmA family.

It localises to the cytoplasm. The catalysed reaction is L-lysyl-[protein] + 3 S-adenosyl-L-methionine = N(6),N(6),N(6)-trimethyl-L-lysyl-[protein] + 3 S-adenosyl-L-homocysteine + 3 H(+). Functionally, methylates ribosomal protein L11. The chain is Ribosomal protein L11 methyltransferase from Clostridium botulinum (strain Hall / ATCC 3502 / NCTC 13319 / Type A).